Consider the following 333-residue polypeptide: Putative fimbrium anchoring subunit Fim4B (333 aa).

A signal peptide spans 1-20 (MRNTRYGFLVLLSSLLMLTG). Cys21 carries the N-palmitoyl cysteine lipid modification. Cys21 carries S-diacylglycerol cysteine lipidation. The disordered stretch occupies residues 274-333 (ENAGTGEDGKPTPPPEIELPPDDKIEVDKPETPPNPDGGGGMGGNVDGWGPEDNVELPVN). Positions 294-304 (PDDKIEVDKPE) are enriched in basic and acidic residues. Gly residues predominate over residues 310 to 320 (DGGGGMGGNVD).

It belongs to the bacteroidetes fimbrillin superfamily. FimB/Mfa2 family.

The protein localises to the cell outer membrane. Putative fimbrium anchoring subunit. This chain is Putative fimbrium anchoring subunit Fim4B, found in Bacteroides ovatus (strain ATCC 8483 / DSM 1896 / JCM 5824 / BCRC 10623 / CCUG 4943 / NCTC 11153).